The following is a 203-amino-acid chain: Holliday junction branch migration complex subunit RuvA (203 aa).

The segment at methionine 1 to leucine 63 is domain I. Residues asparagine 64–lysine 142 are domain II. The segment at glutamate 143–histidine 149 is flexible linker. A domain III region spans residues isoleucine 150–phenylalanine 203.

This sequence belongs to the RuvA family. As to quaternary structure, homotetramer. Forms an RuvA(8)-RuvB(12)-Holliday junction (HJ) complex. HJ DNA is sandwiched between 2 RuvA tetramers; dsDNA enters through RuvA and exits via RuvB. An RuvB hexamer assembles on each DNA strand where it exits the tetramer. Each RuvB hexamer is contacted by two RuvA subunits (via domain III) on 2 adjacent RuvB subunits; this complex drives branch migration. In the full resolvosome a probable DNA-RuvA(4)-RuvB(12)-RuvC(2) complex forms which resolves the HJ.

Its subcellular location is the cytoplasm. Functionally, the RuvA-RuvB-RuvC complex processes Holliday junction (HJ) DNA during genetic recombination and DNA repair, while the RuvA-RuvB complex plays an important role in the rescue of blocked DNA replication forks via replication fork reversal (RFR). RuvA specifically binds to HJ cruciform DNA, conferring on it an open structure. The RuvB hexamer acts as an ATP-dependent pump, pulling dsDNA into and through the RuvAB complex. HJ branch migration allows RuvC to scan DNA until it finds its consensus sequence, where it cleaves and resolves the cruciform DNA. This is Holliday junction branch migration complex subunit RuvA from Rickettsia africae (strain ESF-5).